The chain runs to 437 residues: Acyl-coenzyme A thioesterase 9, mitochondrial (437 aa).

A mitochondrion-targeting transit peptide spans Met-1–Gly-21. HotDog ACOT-type domains follow at residues Ser-84–Glu-207 and Glu-287–Val-399. Residue Lys-101 is modified to N6-acetyllysine.

Belongs to the acyl coenzyme A hydrolase family. Interacts with NYAP1, NYAP2 and MYO16.

The protein resides in the mitochondrion. It is found in the mitochondrion matrix. The protein localises to the mitochondrion inner membrane. It carries out the reaction butanoyl-CoA + H2O = butanoate + CoA + H(+). The enzyme catalyses propanoyl-CoA + H2O = propanoate + CoA + H(+). It catalyses the reaction hexadecanoyl-CoA + H2O = hexadecanoate + CoA + H(+). The catalysed reaction is octanoyl-CoA + H2O = octanoate + CoA + H(+). It carries out the reaction decanoyl-CoA + H2O = decanoate + CoA + H(+). The enzyme catalyses tetradecanoyl-CoA + H2O = tetradecanoate + CoA + H(+). It catalyses the reaction 4,8-dimethylnonanoyl-CoA + H2O = 4,8-dimethylnonanoate + CoA + H(+). The catalysed reaction is 3-methylbutanoyl-CoA + H2O = 3-methylbutanoate + CoA + H(+). It carries out the reaction 2-methylpropanoyl-CoA + H2O = 2-methylpropanoate + CoA + H(+). The protein operates within lipid metabolism; fatty acid metabolism. Strongly inhibited by NADH and CoA. Its function is as follows. Mitochondrial acyl-CoA thioesterase. Catalyzes the hydrolysis of acyl-CoAs into free fatty acids and coenzyme A (CoA), regulating their respective intracellular levels. Regulates both mitochondrial lipid and amino acid metabolism. The chain is Acyl-coenzyme A thioesterase 9, mitochondrial (ACOT9) from Bos taurus (Bovine).